A 595-amino-acid chain; its full sequence is Chaperone protein HscA homolog (595 aa).

This sequence belongs to the heat shock protein 70 family.

In terms of biological role, chaperone involved in the maturation of iron-sulfur cluster-containing proteins. Has a low intrinsic ATPase activity which is markedly stimulated by HscB. This is Chaperone protein HscA homolog from Rickettsia rickettsii (strain Iowa).